We begin with the raw amino-acid sequence, 329 residues long: GTP 3',8-cyclase (329 aa).

Residues 8–234 form the Radical SAM core domain; the sequence is AFARKFYYLR…QLRQRSDGPA (227 aa). Arginine 17 is a binding site for GTP. 2 residues coordinate [4Fe-4S] cluster: cysteine 24 and cysteine 28. Residue tyrosine 30 coordinates S-adenosyl-L-methionine. Cysteine 31 is a binding site for [4Fe-4S] cluster. Residue arginine 68 participates in GTP binding. Glycine 72 is a binding site for S-adenosyl-L-methionine. Threonine 99 serves as a coordination point for GTP. Position 123 (serine 123) interacts with S-adenosyl-L-methionine. Lysine 160 provides a ligand contact to GTP. Position 194 (methionine 194) interacts with S-adenosyl-L-methionine. Positions 257 and 260 each coordinate [4Fe-4S] cluster. Position 262-264 (262-264) interacts with GTP; that stretch reads RLR. Residue cysteine 274 coordinates [4Fe-4S] cluster.

Belongs to the radical SAM superfamily. MoaA family. In terms of assembly, monomer and homodimer. It depends on [4Fe-4S] cluster as a cofactor.

The catalysed reaction is GTP + AH2 + S-adenosyl-L-methionine = (8S)-3',8-cyclo-7,8-dihydroguanosine 5'-triphosphate + 5'-deoxyadenosine + L-methionine + A + H(+). Its pathway is cofactor biosynthesis; molybdopterin biosynthesis. Catalyzes the cyclization of GTP to (8S)-3',8-cyclo-7,8-dihydroguanosine 5'-triphosphate. The sequence is that of GTP 3',8-cyclase from Shigella sonnei (strain Ss046).